The following is a 168-amino-acid chain: DNA-binding protein inhibitor ID-1 (168 aa).

In terms of domain architecture, bHLH spans 46–98 (LPALLDEQQVNVLLYDMNGCYSRLKELVPTLPQNRKVSKVEILQHVIDYIRDL). An interaction with IFI204 region spans residues 53-106 (QQVNVLLYDMNGCYSRLKELVPTLPQNRKVSKVEILQHVIDYIRDLQLELNSES). The short motif at 91 to 104 (VIDYIRDLQLELNS) is the Nuclear export signal element.

Heterodimer with other HLH proteins. Interacts with CLOCK and BMAL1. Interacts with COPS5, IFI204, GATA4 and NKX2-5. Polyubiquitinated; which is favored by Ifi204 and leads to proteasomal degradation.

The protein resides in the cytoplasm. It is found in the nucleus. Its function is as follows. Transcriptional regulator (lacking a basic DNA binding domain) which negatively regulates the basic helix-loop-helix (bHLH) transcription factors by forming heterodimers and inhibiting their DNA binding and transcriptional activity. Implicated in regulating a variety of cellular processes, including cellular growth, senescence, differentiation, apoptosis, angiogenesis, and neoplastic transformation. Inhibits skeletal muscle and cardiac myocyte differentiation. Regulates the circadian clock by repressing the transcriptional activator activity of the CLOCK-BMAL1 heterodimer. In Mus musculus (Mouse), this protein is DNA-binding protein inhibitor ID-1 (Id1).